We begin with the raw amino-acid sequence, 662 residues long: DNA ligase (662 aa).

NAD(+) is bound by residues 31-35 (DKDYD) and 79-80 (SL). K121 functions as the N6-AMP-lysine intermediate in the catalytic mechanism. Positions 143, 177, and 313 each coordinate NAD(+). The Zn(2+) site is built by C406, C409, C422, and C428. Residues 586-662 (VLESPFMGKT…LSEEEFENMI (77 aa)) form the BRCT domain.

The protein belongs to the NAD-dependent DNA ligase family. LigA subfamily. The cofactor is Mg(2+). It depends on Mn(2+) as a cofactor.

It catalyses the reaction NAD(+) + (deoxyribonucleotide)n-3'-hydroxyl + 5'-phospho-(deoxyribonucleotide)m = (deoxyribonucleotide)n+m + AMP + beta-nicotinamide D-nucleotide.. DNA ligase that catalyzes the formation of phosphodiester linkages between 5'-phosphoryl and 3'-hydroxyl groups in double-stranded DNA using NAD as a coenzyme and as the energy source for the reaction. It is essential for DNA replication and repair of damaged DNA. This Clostridium perfringens (strain ATCC 13124 / DSM 756 / JCM 1290 / NCIMB 6125 / NCTC 8237 / Type A) protein is DNA ligase.